The primary structure comprises 243 residues: MEIDQNLFQFPISTRDAVHEKNCTLRVKSTKKRRSSTKDEETRGMHPHIKSSFRNGMNHARVIREEDMEVVFEPCFINLSKPVYVVNGIGGINEIHKLPILFSSFVLCFFGNVSGDYGYVDNVPLHISVISHFYPCLQSYNTDVIGITTDTVENICQWKAHLPRALQFSLPVISDSNNEICREMGMLHPLGGAKLALDAIVIIDSIGRRRDILPIRTTTCVSTLITAVQETVRFLAIENGRLL.

The segment at 28–50 (KSTKKRRSSTKDEETRGMHPHIK) is disordered.

As to quaternary structure, homodimer. Interacts with but2 and uba3.

It localises to the nucleus. Functionally, acts as a negative regulator of the NEDD8 pathway. Has a role in meiosis. This chain is Uba3-binding protein but1 (but1), found in Schizosaccharomyces pombe (strain 972 / ATCC 24843) (Fission yeast).